Reading from the N-terminus, the 262-residue chain is Eukaryotic translation initiation factor 3 subunit G (262 aa).

Residues 182 to 260 (NTCRVTNLPQ…MVLKVEWTRP (79 aa)) form the RRM domain.

The protein belongs to the eIF-3 subunit G family. In terms of assembly, component of the eukaryotic translation initiation factor 3 (eIF-3) complex.

It localises to the cytoplasm. In terms of biological role, RNA-binding component of the eukaryotic translation initiation factor 3 (eIF-3) complex, which is involved in protein synthesis of a specialized repertoire of mRNAs and, together with other initiation factors, stimulates binding of mRNA and methionyl-tRNAi to the 40S ribosome. The eIF-3 complex specifically targets and initiates translation of a subset of mRNAs involved in cell proliferation. This subunit can bind 18S rRNA. Binds to GC-rich 5'UTRs in cholinergic motor neurons, thereby may play a role in translational regulation of mRNAs involved in neuropeptide signaling and stress response, including hlh-30 isoform d and ncs-2. The sequence is that of Eukaryotic translation initiation factor 3 subunit G from Caenorhabditis elegans.